A 245-amino-acid chain; its full sequence is 8-amino-3,8-dideoxy-manno-octulosonate cytidylyltransferase (245 aa).

Belongs to the KdsB family.

It localises to the cytoplasm. The enzyme catalyses 8-amino-3,8-dideoxy-alpha-D-manno-octulosonate + CTP = CMP-8-amino-3,8-dideoxy-alpha-D-manno-oct-2-ulosonate + diphosphate. The protein operates within bacterial outer membrane biogenesis; lipopolysaccharide biosynthesis. Activates KDO8N (a required 8-carbon sugar) for incorporation into bacterial lipopolysaccharide in the Shewanella genus. The polypeptide is 8-amino-3,8-dideoxy-manno-octulosonate cytidylyltransferase (Shewanella sp. (strain MR-7)).